A 702-amino-acid polypeptide reads, in one-letter code: Pentatricopeptide repeat-containing protein At4g16390, chloroplastic (702 aa).

The transit peptide at 1–53 directs the protein to the chloroplast; it reads MSFHHLCSSPSSLLHDPLPLCNLLSVYPKSTPRSFLSSYNPNSSHFHSRNLLQ. PPR repeat units lie at residues 174 to 208, 209 to 243, 244 to 278, 279 to 313, 314 to 348, 349 to 383, 384 to 414, 420 to 454, and 455 to 489; these read EVILYNVTMKVFRKSKDLEKSEKLFDEMLERGIKP, DNATFTTIISCARQNGVPKRAVEWFEKMSSFGCEP, DNVTMAAMIDAYGRAGNVDMALSLYDRARTEKWRI, DAVTFSTLIRIYGVSGNYDGCLNIYEEMKALGVKP, NLVIYNRLIDSMGRAKRPWQAKIIYKDLITNGFTP, NWSTYAALVRAYGRARYGDDALAIYREMKEKGLSL, TVILYNTLLSMCADNRYVDEAFEIFQDMKNC, DSWTFSSLITVYACSGRVSEAEAALLQMREAGFEP, and TLFVLTSVIQCYGKAKQVDDVVRTFDQVLELGITP. Residues 603-688 form the Smr domain; that stretch reads LHLKSLSLGA…WFLTTSVAAK (86 aa).

Belongs to the PPR family. P subfamily. In terms of tissue distribution, expressed in leaves and flowers and at lower levels in stems and flower buds.

Its subcellular location is the plastid. It is found in the chloroplast. Involved in chloroplast RNA processing. Can bind RNA. Involved in chloroplast development. Involved in chloroplast ribosomal RNA (rRNA) processing and/or translation. Required for FtsH-mediated chloroplast biogenesis. Involved in translation and accumulation of chloroplast ATP synthase subunits. This chain is Pentatricopeptide repeat-containing protein At4g16390, chloroplastic, found in Arabidopsis thaliana (Mouse-ear cress).